Consider the following 292-residue polypeptide: ATP synthase gamma chain (292 aa).

This sequence belongs to the ATPase gamma chain family. F-type ATPases have 2 components, CF(1) - the catalytic core - and CF(0) - the membrane proton channel. CF(1) has five subunits: alpha(3), beta(3), gamma(1), delta(1), epsilon(1). CF(0) has three main subunits: a, b and c.

It localises to the cell inner membrane. Functionally, produces ATP from ADP in the presence of a proton gradient across the membrane. The gamma chain is believed to be important in regulating ATPase activity and the flow of protons through the CF(0) complex. This is ATP synthase gamma chain from Chlorobaculum parvum (strain DSM 263 / NCIMB 8327) (Chlorobium vibrioforme subsp. thiosulfatophilum).